We begin with the raw amino-acid sequence, 194 residues long: dITP/XTP pyrophosphatase (194 aa).

Substrate is bound at residue 9–14; sequence THNPGK. Mg(2+)-binding residues include aspartate 40 and aspartate 69. The active-site Proton acceptor is the aspartate 69. Substrate contacts are provided by residues serine 70, 152–155, lysine 175, and 180–181; these read FGYD and HR.

The protein belongs to the HAM1 NTPase family. As to quaternary structure, homodimer. Mg(2+) serves as cofactor.

It carries out the reaction XTP + H2O = XMP + diphosphate + H(+). It catalyses the reaction dITP + H2O = dIMP + diphosphate + H(+). The enzyme catalyses ITP + H2O = IMP + diphosphate + H(+). Functionally, pyrophosphatase that catalyzes the hydrolysis of nucleoside triphosphates to their monophosphate derivatives, with a high preference for the non-canonical purine nucleotides XTP (xanthosine triphosphate), dITP (deoxyinosine triphosphate) and ITP. Seems to function as a house-cleaning enzyme that removes non-canonical purine nucleotides from the nucleotide pool, thus preventing their incorporation into DNA/RNA and avoiding chromosomal lesions. This chain is dITP/XTP pyrophosphatase, found in Caulobacter vibrioides (strain ATCC 19089 / CIP 103742 / CB 15) (Caulobacter crescentus).